The primary structure comprises 454 residues: CCA-adding enzyme (454 aa).

Ser59 and Arg62 together coordinate ATP. CTP is bound by residues Ser59 and Arg62. The Mg(2+) site is built by Asp71, Asp73, and Asp125. ATP is bound by residues His148, Lys167, and Tyr176. CTP contacts are provided by His148, Lys167, and Tyr176.

This sequence belongs to the tRNA nucleotidyltransferase/poly(A) polymerase family. Archaeal CCA-adding enzyme subfamily. In terms of assembly, homodimer. Requires Mg(2+) as cofactor.

The enzyme catalyses a tRNA precursor + 2 CTP + ATP = a tRNA with a 3' CCA end + 3 diphosphate. It carries out the reaction a tRNA with a 3' CCA end + 2 CTP + ATP = a tRNA with a 3' CCACCA end + 3 diphosphate. Functionally, catalyzes the addition and repair of the essential 3'-terminal CCA sequence in tRNAs without using a nucleic acid template. Adds these three nucleotides in the order of C, C, and A to the tRNA nucleotide-73, using CTP and ATP as substrates and producing inorganic pyrophosphate. tRNA 3'-terminal CCA addition is required both for tRNA processing and repair. Also involved in tRNA surveillance by mediating tandem CCA addition to generate a CCACCA at the 3' terminus of unstable tRNAs. While stable tRNAs receive only 3'-terminal CCA, unstable tRNAs are marked with CCACCA and rapidly degraded. The sequence is that of CCA-adding enzyme from Methanosarcina mazei (strain ATCC BAA-159 / DSM 3647 / Goe1 / Go1 / JCM 11833 / OCM 88) (Methanosarcina frisia).